Consider the following 859-residue polypeptide: Protein translocase subunit SecA (859 aa).

Residues Q88, 106 to 110 (GEGKT), and D496 contribute to the ATP site. The segment at 818–838 (FSHQPQSEVKVSRNDPCPCGS) is disordered. Positions 834, 836, 845, and 846 each coordinate Zn(2+).

The protein belongs to the SecA family. As to quaternary structure, monomer and homodimer. Part of the essential Sec protein translocation apparatus which comprises SecA, SecYEG and auxiliary proteins SecDF-YajC and YidC. Zn(2+) is required as a cofactor.

It localises to the cell inner membrane. The protein resides in the cytoplasm. The catalysed reaction is ATP + H2O + cellular proteinSide 1 = ADP + phosphate + cellular proteinSide 2.. In terms of biological role, part of the Sec protein translocase complex. Interacts with the SecYEG preprotein conducting channel. Has a central role in coupling the hydrolysis of ATP to the transfer of proteins into and across the cell membrane, serving as an ATP-driven molecular motor driving the stepwise translocation of polypeptide chains across the membrane. This is Protein translocase subunit SecA from Wolinella succinogenes (strain ATCC 29543 / DSM 1740 / CCUG 13145 / JCM 31913 / LMG 7466 / NCTC 11488 / FDC 602W) (Vibrio succinogenes).